An 80-amino-acid chain; its full sequence is Toxin Acra I-3 (80 aa).

An N-terminal signal peptide occupies residues 1-22 (MMKLVLLSVIVILFSLIGSIHG). Residues 25–80 (VPGNYPLDSSGNKYPCTVLGDNQSCIDVCKKHGVKYGYCYGFKCWCEYLKDKNVSL) enclose the LCN-type CS-alpha/beta domain. Cystine bridges form between C40/C63, C49/C68, and C53/C70.

Belongs to the long (3 C-C) scorpion toxin superfamily. Sodium/Potassium channel inhibitor family. As to expression, expressed by the venom gland.

It localises to the secreted. Functionally, probable neurotoxin that inhibits ion channels. Is toxic to mice. This chain is Toxin Acra I-3, found in Androctonus crassicauda (Arabian fat-tailed scorpion).